Reading from the N-terminus, the 26-residue chain is Conotoxin Eb6.17 (26 aa).

Intrachain disulfides connect C7–C18 and C13–C25.

Belongs to the conotoxin O1 superfamily. As to expression, expressed by the venom duct.

It is found in the secreted. The chain is Conotoxin Eb6.17 (E1) from Conus ebraeus (Hebrew cone).